The chain runs to 289 residues: Glucanase inhibitor protein 2 (289 aa).

The first 19 residues, 1–19 (MKVTATIAAASMAIAAASA), serve as a signal peptide directing secretion. The region spanning 29–257 (ILGGSIIPSG…ALKWVNPIIK (229 aa)) is the Peptidase S1 domain. Residues cysteine 56 and cysteine 72 are joined by a disulfide bond. N-linked (GlcNAc...) asparagine glycosylation is found at asparagine 89, asparagine 104, and asparagine 109. Cystine bridges form between cysteine 180–cysteine 192 and cysteine 202–cysteine 233.

This sequence belongs to the peptidase S1 family.

The protein localises to the secreted. In terms of biological role, secreted effector that suppresses host plant glucan elicitor-mediated defense responses. Targets host endoglucanases and inhibits the endoglucanase-mediated release of elicitor-active glucan oligosaccharides from P.sojae cell walls. This chain is Glucanase inhibitor protein 2, found in Phytophthora sojae (Soybean stem and root rot agent).